A 283-amino-acid chain; its full sequence is Shikimate dehydrogenase (NADP(+)) (283 aa).

Residues 22 to 24 and Thr-69 contribute to the shikimate site; that span reads SRS. Lys-73 acts as the Proton acceptor in catalysis. Shikimate-binding residues include Asn-93 and Asp-108. Residues 133–137 and Leu-222 each bind NADP(+); that span reads GAGGS. Tyr-224 serves as a coordination point for shikimate. Gly-245 contacts NADP(+).

Belongs to the shikimate dehydrogenase family. Homodimer.

It carries out the reaction shikimate + NADP(+) = 3-dehydroshikimate + NADPH + H(+). The protein operates within metabolic intermediate biosynthesis; chorismate biosynthesis; chorismate from D-erythrose 4-phosphate and phosphoenolpyruvate: step 4/7. Its function is as follows. Involved in the biosynthesis of the chorismate, which leads to the biosynthesis of aromatic amino acids. Catalyzes the reversible NADPH linked reduction of 3-dehydroshikimate (DHSA) to yield shikimate (SA). The protein is Shikimate dehydrogenase (NADP(+)) of Rhodopseudomonas palustris (strain BisB5).